Here is a 597-residue protein sequence, read N- to C-terminus: MEGKKEMGSYKFCLIFTRKFRMTESGPVEDVRDLFEKYTEGDAHMSPEQLQKLMTEEGGEGETSLEEAERIVDEVLRRKHHIAKFTRRNLTLDDFNYYLFSTDLNPPIADQVHQNMDAPLSHYFIFTGHNSYLTGNQLSSNCSELPIADALRRGVRVVELDLWPRGTDDVCVKHGRTLTKEVKLGKCLESIKANAFAISKYPVIITLEDHLTPKLQFKVAKMITQTFGDMLYYHDSQGCQEFPSPEELKEKILISTKPPKEYLEANDTKEKDNGEKGKDSDEDVWGKEPEDLISTQSDLDKVTSSVNDLNQDDEERGSCESDTSCQLQAPEYKRLIAIHAGKPKGGLRMALKVDPNKIRRLSLSEQLLEKAVASYGADVIRFTQKNFLRIYPKGTRFNSSNYKPQIGWMSGAQMIAFNMQGYGRALWLMEGMFRANGGCGYVKKPDFLMDASPNGQDFYPKDNSSPKKTLKVKVCMGDGWLLDFKKTHFDSYSPPDFFVRVGIAGAPVDEVMEKTKIEYDTWTPIWNKEFTFPLAVPELALLRVEVHEHDVNEKDDFGGQTCLPVSEIRQGIRAVPLFNRKGVKYSSTRLLMRFEFV.

In terms of domain architecture, EF-hand spans 26–60; it reads GPVEDVRDLFEKYTEGDAHMSPEQLQKLMTEEGGE. Residues 114 to 257 form the PI-PLC X-box domain; it reads QNMDAPLSHY…LKEKILISTK (144 aa). Residues histidine 129 and histidine 174 contribute to the active site. Residues 259–290 are compositionally biased toward basic and acidic residues; that stretch reads PKEYLEANDTKEKDNGEKGKDSDEDVWGKEPE. The interval 259–324 is disordered; that stretch reads PKEYLEANDT…ERGSCESDTS (66 aa). Over residues 293 to 309 the composition is skewed to polar residues; it reads ISTQSDLDKVTSSVNDL. A PI-PLC Y-box domain is found at 333-449; it reads KRLIAIHAGK…GYVKKPDFLM (117 aa). The 131-residue stretch at 449 to 579 folds into the C2 domain; the sequence is MDASPNGQDF…QGIRAVPLFN (131 aa).

It depends on Ca(2+) as a cofactor. As to expression, low expression in leaves, roots, flowers and siliques. Expressed in pollen and in cells of the stigma surface.

The protein localises to the cytoplasm. It localises to the cytosol. Its subcellular location is the cell membrane. It carries out the reaction a 1,2-diacyl-sn-glycero-3-phospho-(1D-myo-inositol-4,5-bisphosphate) + H2O = 1D-myo-inositol 1,4,5-trisphosphate + a 1,2-diacyl-sn-glycerol + H(+). Functionally, the production of the second messenger molecules diacylglycerol (DAG) and inositol 1,4,5-trisphosphate (IP3) is mediated by activated phosphatidylinositol-specific phospholipase C enzymes. In Arabidopsis thaliana (Mouse-ear cress), this protein is Phosphoinositide phospholipase C 4 (PLC4).